The sequence spans 336 residues: 4-hydroxythreonine-4-phosphate dehydrogenase (336 aa).

The substrate site is built by His-142 and Thr-143. Residues His-172, His-217, and His-274 each coordinate a divalent metal cation. The substrate site is built by Lys-282, Asn-291, and Arg-300.

It belongs to the PdxA family. Homodimer. Zn(2+) is required as a cofactor. It depends on Mg(2+) as a cofactor. The cofactor is Co(2+).

Its subcellular location is the cytoplasm. It catalyses the reaction 4-(phosphooxy)-L-threonine + NAD(+) = 3-amino-2-oxopropyl phosphate + CO2 + NADH. The protein operates within cofactor biosynthesis; pyridoxine 5'-phosphate biosynthesis; pyridoxine 5'-phosphate from D-erythrose 4-phosphate: step 4/5. Functionally, catalyzes the NAD(P)-dependent oxidation of 4-(phosphooxy)-L-threonine (HTP) into 2-amino-3-oxo-4-(phosphooxy)butyric acid which spontaneously decarboxylates to form 3-amino-2-oxopropyl phosphate (AHAP). In Trichlorobacter lovleyi (strain ATCC BAA-1151 / DSM 17278 / SZ) (Geobacter lovleyi), this protein is 4-hydroxythreonine-4-phosphate dehydrogenase.